The primary structure comprises 425 residues: Septin-11 (425 aa).

Ala-2 is subject to N-acetylalanine. Ser-9 carries the post-translational modification Phosphoserine. Residues 38-304 (QGFCFNILCV…ELYRRCKLEE (267 aa)) enclose the Septin-type G domain. The G1 motif stretch occupies residues 48–55 (GETGIGKS). GTP-binding positions include 48–55 (GETGIGKS), Gly-103, 184–192 (KADTIAKNE), Gly-238, and Arg-253. The G3 motif stretch occupies residues 100-103 (DTVG). The segment at 183–186 (AKAD) is G4 motif. Positions 320 to 410 (QETYEAKRNE…AAQLLQSQAQ (91 aa)) form a coiled coil. The tract at residues 399–425 (KAAAQLLQSQAQQSGAQQTKKDKDKKN) is disordered. A compositionally biased stretch (low complexity) spans 401–416 (AAQLLQSQAQQSGAQQ).

This sequence belongs to the TRAFAC class TrmE-Era-EngA-EngB-Septin-like GTPase superfamily. Septin GTPase family. Septins polymerize into heterooligomeric protein complexes that form filaments, and can associate with cellular membranes, actin filaments and microtubules. Forms homooligomers. GTPase activity is required for filament formation. Interacts with SEPTIN7, SEPTIN9 and SEPTIN12.

It is found in the cytoplasm. The protein resides in the cytoskeleton. The protein localises to the synapse. Its subcellular location is the cell projection. It localises to the dendritic spine. It is found in the axon. In terms of biological role, filament-forming cytoskeletal GTPase. May play a role in cytokinesis (Potential). May play a role in the cytoarchitecture of neurons, including dendritic arborization and dendritic spines, and in GABAergic synaptic connectivity. The protein is Septin-11 of Bos taurus (Bovine).